The chain runs to 90 residues: MAHKKSGGSSSNGRDSAGRRLGVKKFGGQKVAAGNIIIRQRGTKFYPGANVGMGKDHTLFALIEGAVAFVTKRNNRTYVNVAAPVAQAAE.

The segment at 1-22 (MAHKKSGGSSSNGRDSAGRRLG) is disordered.

The protein belongs to the bacterial ribosomal protein bL27 family.

The protein is Large ribosomal subunit protein bL27 of Caulobacter sp. (strain K31).